The sequence spans 225 residues: Transcription factor HES-7 (225 aa).

The 58-residue stretch at 12–69 folds into the bHLH domain; sequence GPKMLKPLVEKRRRDRINRSLEELRLLLLERTRDQNLRNPKLEKAEILEFAVGYLRER. Residues 92–122 form the Orange domain; that stretch reads YLSGFRECLLRLAAFAHDASPAARAQLFSAL. The interval 125–225 is disordered; that stretch reads YLRPKPPRPK…PPPAFWRPWP (101 aa). The span at 147-158 shows a compositional bias: low complexity; sequence LDPAAPALGPAL. A compositionally biased stretch (pro residues) spans 212–225; that stretch reads APLPPPPAFWRPWP. The short motif at 221 to 224 is the WRPW motif element; sequence WRPW.

In terms of assembly, transcription repression requires formation of a complex with a corepressor protein of the Groucho/TLE family.

It localises to the nucleus. In terms of biological role, transcriptional repressor. Represses transcription from both N box- and E box-containing promoters. May with HES1, cooperatively regulate somite formation in the presomitic mesoderm (PSM). May function as a segmentation clock, which is essential for coordinated somite segmentation. The sequence is that of Transcription factor HES-7 (HES7) from Homo sapiens (Human).